Reading from the N-terminus, the 118-residue chain is Co-chaperonin GroES (118 aa).

This sequence belongs to the GroES chaperonin family. In terms of assembly, heptamer of 7 subunits arranged in a ring. Interacts with the chaperonin GroEL.

It localises to the cytoplasm. Its function is as follows. Together with the chaperonin GroEL, plays an essential role in assisting protein folding. The GroEL-GroES system forms a nano-cage that allows encapsulation of the non-native substrate proteins and provides a physical environment optimized to promote and accelerate protein folding. GroES binds to the apical surface of the GroEL ring, thereby capping the opening of the GroEL channel. The polypeptide is Co-chaperonin GroES (Helicobacter acinonychis (strain Sheeba)).